The chain runs to 341 residues: Glyceraldehyde-3-phosphate dehydrogenase (341 aa).

NAD(+) is bound by residues 11–12 (TI) and glycine 110. 139–141 (SCN) contacts D-glyceraldehyde 3-phosphate. Cysteine 140 (nucleophile) is an active-site residue. An NAD(+)-binding site is contributed by arginine 168. 194–195 (HG) lines the D-glyceraldehyde 3-phosphate pocket. Glutamine 302 is a binding site for NAD(+).

Belongs to the glyceraldehyde-3-phosphate dehydrogenase family. In terms of assembly, homotetramer.

The protein resides in the cytoplasm. The enzyme catalyses D-glyceraldehyde 3-phosphate + phosphate + NADP(+) = (2R)-3-phospho-glyceroyl phosphate + NADPH + H(+). It carries out the reaction D-glyceraldehyde 3-phosphate + phosphate + NAD(+) = (2R)-3-phospho-glyceroyl phosphate + NADH + H(+). It participates in carbohydrate degradation; glycolysis; pyruvate from D-glyceraldehyde 3-phosphate: step 1/5. This Methanoculleus marisnigri (strain ATCC 35101 / DSM 1498 / JR1) protein is Glyceraldehyde-3-phosphate dehydrogenase.